The chain runs to 217 residues: Large ribosomal subunit protein uL3 (217 aa).

The interval 129 to 161 is disordered; the sequence is SRGPMSHGSKNHRAPGSTGAGTTPGRIYPGKRM. The segment covering 142 to 153 has biased composition (low complexity); it reads APGSTGAGTTPG.

It belongs to the universal ribosomal protein uL3 family. As to quaternary structure, part of the 50S ribosomal subunit. Forms a cluster with proteins L14 and L19.

One of the primary rRNA binding proteins, it binds directly near the 3'-end of the 23S rRNA, where it nucleates assembly of the 50S subunit. The chain is Large ribosomal subunit protein uL3 from Prochlorococcus marinus (strain MIT 9515).